A 126-amino-acid polypeptide reads, in one-letter code: Histone H2B type 1-C/E/G (126 aa).

The segment covering 1–12 (MPEPAKSAPAPK) has biased composition (low complexity). Residues 1–36 (MPEPAKSAPAPKKGSKKAVTKAQKKDGKKRKRSRKE) form a disordered region. Proline 2 carries the post-translational modification N-acetylproline. An ADP-ribosyl glutamic acid modification is found at glutamate 3. An N6-(2-hydroxyisobutyryl)lysine; alternate modification is found at lysine 6. N6-(beta-hydroxybutyryl)lysine; alternate is present on lysine 6. Lysine 6 is subject to N6-acetyllysine; alternate. The residue at position 6 (lysine 6) is an N6-butyryllysine; alternate. Lysine 6 bears the N6-crotonyllysine; alternate mark. Lysine 6 is modified (N6-lactoyllysine; alternate). Lysine 6 participates in a covalent cross-link: Glycyl lysine isopeptide (Lys-Gly) (interchain with G-Cter in SUMO2); alternate. Position 7 is an ADP-ribosylserine (serine 7). Lysine 12 carries the post-translational modification N6-(beta-hydroxybutyryl)lysine; alternate. 2 positions are modified to N6-acetyllysine; alternate: lysine 12 and lysine 13. Residues lysine 12 and lysine 13 each carry the N6-crotonyllysine; alternate modification. Lysine 12 is subject to N6-lactoyllysine; alternate. Lysine 13 is subject to N6-(2-hydroxyisobutyryl)lysine; alternate. Serine 15 carries the phosphoserine; by STK4/MST1 modification. Lysine 16, lysine 17, lysine 21, and lysine 24 each carry N6-acetyllysine; alternate. N6-crotonyllysine; alternate occurs at positions 16, 17, 21, and 24. Lysine 16, lysine 17, lysine 21, and lysine 24 each carry N6-lactoyllysine; alternate. Position 17 is an N6-glutaryllysine; alternate (lysine 17). N6-(2-hydroxyisobutyryl)lysine; alternate occurs at positions 21 and 24. Position 21 is an N6-(beta-hydroxybutyryl)lysine; alternate (lysine 21). At lysine 21 the chain carries N6-butyryllysine; alternate. Residue lysine 21 forms a Glycyl lysine isopeptide (Lys-Gly) (interchain with G-Cter in SUMO2); alternate linkage. Lysine 25 is subject to N6-(2-hydroxyisobutyryl)lysine. Residue lysine 35 is modified to N6-(2-hydroxyisobutyryl)lysine; alternate. N6-(beta-hydroxybutyryl)lysine; alternate is present on lysine 35. Residue lysine 35 is modified to N6-crotonyllysine; alternate. Lysine 35 is subject to N6-glutaryllysine; alternate. Residue lysine 35 is modified to N6-succinyllysine; alternate. Lysine 35 is covalently cross-linked (Glycyl lysine isopeptide (Lys-Gly) (interchain with G-Cter in ubiquitin); alternate). Position 36 is a polyADP-ribosyl glutamic acid (glutamate 36). At serine 37 the chain carries Phosphoserine; by AMPK. Residues lysine 44, lysine 47, and lysine 58 each carry the N6-(2-hydroxyisobutyryl)lysine; alternate modification. An N6-lactoyllysine; alternate modification is found at lysine 44. 2 positions are modified to N6-glutaryllysine; alternate: lysine 44 and lysine 47. The residue at position 47 (lysine 47) is an N6-methyllysine; alternate. N6,N6-dimethyllysine; alternate is present on lysine 58. Arginine 80 is subject to Dimethylated arginine. Lysine 86 carries the N6-(2-hydroxyisobutyryl)lysine; alternate modification. N6-acetyllysine; alternate is present on lysine 86. N6-lactoyllysine; alternate is present on lysine 86. Lysine 86 bears the N6,N6,N6-trimethyllysine; alternate mark. Omega-N-methylarginine is present on residues arginine 87 and arginine 93. Lysine 109 is modified (N6-(2-hydroxyisobutyryl)lysine; alternate). N6-(beta-hydroxybutyryl)lysine; alternate is present on lysine 109. N6-lactoyllysine; alternate is present on lysine 109. Lysine 109 is modified (N6-glutaryllysine; alternate). Lysine 109 bears the N6-methyllysine; alternate mark. An O-linked (GlcNAc) serine glycan is attached at serine 113. Threonine 116 carries the post-translational modification Phosphothreonine. Residues lysine 117 and lysine 121 each carry the N6-(2-hydroxyisobutyryl)lysine; alternate modification. At lysine 117 the chain carries N6-(beta-hydroxybutyryl)lysine; alternate. 2 positions are modified to N6-lactoyllysine; alternate: lysine 117 and lysine 121. 2 positions are modified to N6-glutaryllysine; alternate: lysine 117 and lysine 121. 2 positions are modified to N6-succinyllysine; alternate: lysine 117 and lysine 121. At lysine 117 the chain carries N6-methylated lysine; alternate. Residue lysine 121 forms a Glycyl lysine isopeptide (Lys-Gly) (interchain with G-Cter in ubiquitin); alternate linkage.

This sequence belongs to the histone H2B family. In terms of assembly, the nucleosome is a histone octamer containing two molecules each of H2A, H2B, H3 and H4 assembled in one H3-H4 heterotetramer and two H2A-H2B heterodimers. The octamer wraps approximately 147 bp of DNA. Interacts with VRK1; the interaction is mediated by the nucleosome acidic patch, a cluster of negatively charged residues of H2A and H2B forming a cleft within the nucleosome core. Monoubiquitination at Lys-35 (H2BK34Ub) by the MSL1/MSL2 dimer is required for histone H3 'Lys-4' (H3K4me) and 'Lys-79' (H3K79me) methylation and transcription activation at specific gene loci, such as HOXA9 and MEIS1 loci. Similarly, monoubiquitination at Lys-121 (H2BK120Ub) by the RNF20/40 complex gives a specific tag for epigenetic transcriptional activation and is also prerequisite for histone H3 'Lys-4' and 'Lys-79' methylation. It also functions cooperatively with the FACT dimer to stimulate elongation by RNA polymerase II. H2BK120Ub also acts as a regulator of mRNA splicing: deubiquitination by USP49 is required for efficient cotranscriptional splicing of a large set of exons. Post-translationally, phosphorylated on Ser-15 (H2BS14ph) by STK4/MST1 during apoptosis; which facilitates apoptotic chromatin condensation. Also phosphorylated on Ser-15 in response to DNA double strand breaks (DSBs), and in correlation with somatic hypermutation and immunoglobulin class-switch recombination. Phosphorylation at Ser-37 (H2BS36ph) by AMPK in response to stress promotes transcription. In terms of processing, glcNAcylation at Ser-113 promotes monoubiquitination of Lys-121. It fluctuates in response to extracellular glucose, and associates with transcribed genes. ADP-ribosylated by PARP1 or PARP2 on Ser-7 (H2BS6ADPr) in response to DNA damage. H2BS6ADPr promotes recruitment of CHD1L. Mono-ADP-ribosylated on Glu-3 (H2BE2ADPr) by PARP3 in response to single-strand breaks. Poly ADP-ribosylation on Glu-36 (H2BE35ADPr) by PARP1 regulates adipogenesis: it inhibits phosphorylation at Ser-37 (H2BS36ph), thereby blocking expression of pro-adipogenetic genes. Post-translationally, crotonylation (Kcr) is specifically present in male germ cells and marks testis-specific genes in post-meiotic cells, including X-linked genes that escape sex chromosome inactivation in haploid cells. Crotonylation marks active promoters and enhancers and confers resistance to transcriptional repressors. It is also associated with post-meiotically activated genes on autosomes. In terms of processing, hydroxybutyrylation of histones is induced by starvation. Lactylated in macrophages by EP300/P300 by using lactoyl-CoA directly derived from endogenous or exogenous lactate, leading to stimulates gene transcription.

It is found in the nucleus. Its subcellular location is the chromosome. Its function is as follows. Core component of nucleosome. Nucleosomes wrap and compact DNA into chromatin, limiting DNA accessibility to the cellular machineries which require DNA as a template. Histones thereby play a central role in transcription regulation, DNA repair, DNA replication and chromosomal stability. DNA accessibility is regulated via a complex set of post-translational modifications of histones, also called histone code, and nucleosome remodeling. This Mus musculus (Mouse) protein is Histone H2B type 1-C/E/G.